Here is a 300-residue protein sequence, read N- to C-terminus: Cholesterol 25-hydroxylase-like protein (300 aa).

Asn-9 carries an N-linked (GlcNAc...) asparagine glycan. Transmembrane regions (helical) follow at residues 43 to 63 (LFPP…FTFI), 95 to 115 (LQGW…LIWV), and 130 to 152 (MVSQ…HYFN). The region spanning 135-266 (AIFFLAFDFT…WFNYLDRLMG (132 aa)) is the Fatty acid hydroxylase domain. A Histidine box-1 motif is present at residues 148–152 (FHYFN). The Histidine box-2 signature appears at 163–167 (HSVHH). A helical transmembrane segment spans residues 180–200 (LHPFELFFVATFITTVPWIFP). Residues 242 to 248 (AHDMHHL) carry the Histidine box-3 motif.

The protein belongs to the sterol desaturase family. It depends on Fe cation as a cofactor.

The protein localises to the membrane. Functionally, probable sterol desaturase. This is Cholesterol 25-hydroxylase-like protein from Caenorhabditis briggsae.